Reading from the N-terminus, the 172-residue chain is 3-hydroxydecanoyl-[acyl-carrier-protein] dehydratase (172 aa).

Histidine 71 is an active-site residue.

It belongs to the thioester dehydratase family. FabA subfamily. In terms of assembly, homodimer.

It localises to the cytoplasm. The enzyme catalyses a (3R)-hydroxyacyl-[ACP] = a (2E)-enoyl-[ACP] + H2O. It catalyses the reaction (3R)-hydroxydecanoyl-[ACP] = (2E)-decenoyl-[ACP] + H2O. The catalysed reaction is (2E)-decenoyl-[ACP] = (3Z)-decenoyl-[ACP]. It functions in the pathway lipid metabolism; fatty acid biosynthesis. Its function is as follows. Necessary for the introduction of cis unsaturation into fatty acids. Catalyzes the dehydration of (3R)-3-hydroxydecanoyl-ACP to E-(2)-decenoyl-ACP and then its isomerization to Z-(3)-decenoyl-ACP. Can catalyze the dehydratase reaction for beta-hydroxyacyl-ACPs with saturated chain lengths up to 16:0, being most active on intermediate chain length. This is 3-hydroxydecanoyl-[acyl-carrier-protein] dehydratase from Enterobacter sp. (strain 638).